The primary structure comprises 320 residues: MDGESSLERYLDQCDAEDVLASSHMFTPMTPYDDLAIQPLPGTSYSSTLEHSKELSTDFSSVDLSFLPDDLNQENEDQQEQTPSQSLEHDSGICLDASNLSQPFTPSECRDATQDSSNLCTMPITPMTPMTPMTPVAESSGIVPQLQNIVSTVNLACKLDLKKIALHARNAEYNPKRFAAVIMRIREPRTTALIFSSGKMVCTGAKSEEQSRLAARKYARVVQKLGFPAKFLDFKIQNMVGSCDVRFPIRLEGLVLTHQQFSSYEPELFPGLIYRMVKPRIVLLIFVSGKVVLTGAKERSEIYEAFENIYPILKGFKKTT.

This sequence belongs to the TBP family. In terms of tissue distribution, expression is restricted to the gonads, and is higher in the ovary than the testis.

It is found in the nucleus. Functionally, TATA box-binding transcription factor. Members of the TBP family are differentially required to regulate transcription and development during early embryogenesis. Required for gastrulation. Regulates a large subset of genes that are ventrally expressed. Binds to a subset of promoters. The protein is TATA box-binding protein-like 2 of Xenopus laevis (African clawed frog).